The primary structure comprises 384 residues: 5-amino-6-(D-ribitylamino)uracil--L-tyrosine 4-hydroxyphenyl transferase 2 (384 aa).

Positions 53-286 (VSYVVNRNIY…IAISRIILHT (234 aa)) constitute a Radical SAM core domain. 3 residues coordinate [4Fe-4S] cluster: C67, C71, and C74.

The protein belongs to the radical SAM superfamily. CofH family. As to quaternary structure, consists of two subunits, CofG and CofH. The cofactor is [4Fe-4S] cluster.

It carries out the reaction 5-amino-6-(D-ribitylamino)uracil + L-tyrosine + S-adenosyl-L-methionine = 5-amino-5-(4-hydroxybenzyl)-6-(D-ribitylimino)-5,6-dihydrouracil + 2-iminoacetate + 5'-deoxyadenosine + L-methionine + H(+). The protein operates within cofactor biosynthesis; coenzyme F0 biosynthesis. Catalyzes the radical-mediated synthesis of 5-amino-5-(4-hydroxybenzyl)-6-(D-ribitylimino)-5,6-dihydrouracil from 5-amino-6-(D-ribitylamino)uracil and L-tyrosine. The sequence is that of 5-amino-6-(D-ribitylamino)uracil--L-tyrosine 4-hydroxyphenyl transferase 2 from Methanosarcina acetivorans (strain ATCC 35395 / DSM 2834 / JCM 12185 / C2A).